We begin with the raw amino-acid sequence, 635 residues long: Cilia- and flagella-associated protein 206 (635 aa).

Belongs to the CFAP206 family.

Its subcellular location is the cytoplasm. The protein resides in the cytoskeleton. It localises to the cilium axoneme. Functionally, may regulate cilium motility through its role in the assembly of the axonemal RS2 radial spoke. In Tetrahymena thermophila (strain SB210), this protein is Cilia- and flagella-associated protein 206.